The chain runs to 192 residues: Small ribosomal subunit protein bS16 (192 aa).

Residues 149–161 (EKKAAEAKAKAEA) are compositionally biased toward basic and acidic residues. Residues 149–192 (EKKAAEAKAKAEAEAAAAAEEATETEETPMEAAAEEAPAAESAE) are disordered. The span at 178-192 (MEAAAEEAPAAESAE) shows a compositional bias: low complexity.

It belongs to the bacterial ribosomal protein bS16 family.

This Porphyromonas gingivalis (strain ATCC 33277 / DSM 20709 / CIP 103683 / JCM 12257 / NCTC 11834 / 2561) protein is Small ribosomal subunit protein bS16.